The following is an 80-amino-acid chain: NAD(P)H-quinone oxidoreductase subunit O (80 aa).

It belongs to the complex I NdhO subunit family. As to quaternary structure, NDH-1 can be composed of about 15 different subunits; different subcomplexes with different compositions have been identified which probably have different functions.

It is found in the cellular thylakoid membrane. It carries out the reaction a plastoquinone + NADH + (n+1) H(+)(in) = a plastoquinol + NAD(+) + n H(+)(out). It catalyses the reaction a plastoquinone + NADPH + (n+1) H(+)(in) = a plastoquinol + NADP(+) + n H(+)(out). In terms of biological role, NDH-1 shuttles electrons from an unknown electron donor, via FMN and iron-sulfur (Fe-S) centers, to quinones in the respiratory and/or the photosynthetic chain. The immediate electron acceptor for the enzyme in this species is believed to be plastoquinone. Couples the redox reaction to proton translocation, and thus conserves the redox energy in a proton gradient. Cyanobacterial NDH-1 also plays a role in inorganic carbon-concentration. The sequence is that of NAD(P)H-quinone oxidoreductase subunit O from Prochlorococcus marinus (strain MIT 9515).